A 417-amino-acid chain; its full sequence is Tyrosine--tRNA ligase (417 aa).

Y36 is a binding site for L-tyrosine. Residues 41–50 carry the 'HIGH' region motif; it reads PTADSLHIGH. L-tyrosine contacts are provided by Y170 and Q174. Residues 231-235 carry the 'KMSKS' region motif; that stretch reads KFGKS. Residue K234 coordinates ATP. Residues 351 to 417 enclose the S4 RNA-binding domain; the sequence is TNLVELLIEA…GKKKYFMIIH (67 aa).

It belongs to the class-I aminoacyl-tRNA synthetase family. TyrS type 1 subfamily. As to quaternary structure, homodimer.

It is found in the cytoplasm. It carries out the reaction tRNA(Tyr) + L-tyrosine + ATP = L-tyrosyl-tRNA(Tyr) + AMP + diphosphate + H(+). Functionally, catalyzes the attachment of tyrosine to tRNA(Tyr) in a two-step reaction: tyrosine is first activated by ATP to form Tyr-AMP and then transferred to the acceptor end of tRNA(Tyr). The polypeptide is Tyrosine--tRNA ligase (Macrococcus caseolyticus (strain JCSC5402) (Macrococcoides caseolyticum)).